We begin with the raw amino-acid sequence, 86 residues long: Toxin CSTX-20 (86 aa).

As to expression, expressed by the venom gland.

Its subcellular location is the secreted. The protein is Toxin CSTX-20 of Cupiennius salei (American wandering spider).